A 287-amino-acid polypeptide reads, in one-letter code: ATP synthase gamma chain (287 aa).

It belongs to the ATPase gamma chain family. In terms of assembly, F-type ATPases have 2 components, CF(1) - the catalytic core - and CF(0) - the membrane proton channel. CF(1) has five subunits: alpha(3), beta(3), gamma(1), delta(1), epsilon(1). CF(0) has three main subunits: a, b and c.

It is found in the cell membrane. In terms of biological role, produces ATP from ADP in the presence of a proton gradient across the membrane. The gamma chain is believed to be important in regulating ATPase activity and the flow of protons through the CF(0) complex. This Halothermothrix orenii (strain H 168 / OCM 544 / DSM 9562) protein is ATP synthase gamma chain.